The sequence spans 247 residues: RNA-free ribonuclease P (247 aa).

This sequence belongs to the HARP family.

It carries out the reaction Endonucleolytic cleavage of RNA, removing 5'-extranucleotides from tRNA precursor.. RNA-free RNase P that catalyzes the removal of the 5'-leader sequence from pre-tRNA to produce the mature 5'-terminus. This chain is RNA-free ribonuclease P, found in Methanosarcina mazei (strain ATCC BAA-159 / DSM 3647 / Goe1 / Go1 / JCM 11833 / OCM 88) (Methanosarcina frisia).